A 1198-amino-acid polypeptide reads, in one-letter code: Tetratricopeptide repeat protein 17 (1198 aa).

A TPR 1 repeat occupies phenylalanine 295–phenylalanine 328. Residues cysteine 340–histidine 382 are a coiled coil. 2 TPR repeats span residues tryptophan 619 to glutamine 652 and proline 689 to cysteine 722. 2 disordered regions span residues leucine 774–serine 793 and valine 902–leucine 954. The span at valine 902–glycine 914 shows a compositional bias: basic residues. 3 TPR repeats span residues serine 1071 to glutamine 1105, aspartate 1108 to phenylalanine 1141, and alanine 1142 to phenylalanine 1175.

This sequence belongs to the TTC17 family. Interacts with CATIP.

It is found in the cytoplasm. The protein localises to the cell membrane. The protein resides in the cytoskeleton. Plays a role in primary ciliogenesis by modulating actin polymerization. This chain is Tetratricopeptide repeat protein 17 (Ttc17), found in Mus musculus (Mouse).